Reading from the N-terminus, the 365-residue chain is Phosphoserine aminotransferase (365 aa).

Arginine 40 contacts L-glutamate. Residues 74–75 (AS), phenylalanine 99, threonine 155, aspartate 177, and glutamine 200 contribute to the pyridoxal 5'-phosphate site. Residue lysine 201 is modified to N6-(pyridoxal phosphate)lysine. Residue 241 to 242 (NT) participates in pyridoxal 5'-phosphate binding.

This sequence belongs to the class-V pyridoxal-phosphate-dependent aminotransferase family. SerC subfamily. In terms of assembly, homodimer. Pyridoxal 5'-phosphate is required as a cofactor.

The protein localises to the cytoplasm. The catalysed reaction is O-phospho-L-serine + 2-oxoglutarate = 3-phosphooxypyruvate + L-glutamate. It catalyses the reaction 4-(phosphooxy)-L-threonine + 2-oxoglutarate = (R)-3-hydroxy-2-oxo-4-phosphooxybutanoate + L-glutamate. It functions in the pathway amino-acid biosynthesis; L-serine biosynthesis; L-serine from 3-phospho-D-glycerate: step 2/3. Catalyzes the reversible conversion of 3-phosphohydroxypyruvate to phosphoserine and of 3-hydroxy-2-oxo-4-phosphonooxybutanoate to phosphohydroxythreonine. The sequence is that of Phosphoserine aminotransferase from Lactococcus lactis subsp. cremoris (strain MG1363).